The following is a 316-amino-acid chain: 4-hydroxy-3-methylbut-2-enyl diphosphate reductase (316 aa).

A [4Fe-4S] cluster-binding site is contributed by C18. H47 and H80 together coordinate (2E)-4-hydroxy-3-methylbut-2-enyl diphosphate. Dimethylallyl diphosphate-binding residues include H47 and H80. H47 and H80 together coordinate isopentenyl diphosphate. A [4Fe-4S] cluster-binding site is contributed by C102. (2E)-4-hydroxy-3-methylbut-2-enyl diphosphate is bound at residue H130. H130 lines the dimethylallyl diphosphate pocket. H130 is a binding site for isopentenyl diphosphate. The active-site Proton donor is E132. T171 lines the (2E)-4-hydroxy-3-methylbut-2-enyl diphosphate pocket. C201 contacts [4Fe-4S] cluster. (2E)-4-hydroxy-3-methylbut-2-enyl diphosphate contacts are provided by S229, S230, N231, and S274. Residues S229, S230, N231, and S274 each contribute to the dimethylallyl diphosphate site. 4 residues coordinate isopentenyl diphosphate: S229, S230, N231, and S274.

Belongs to the IspH family. The cofactor is [4Fe-4S] cluster.

The catalysed reaction is isopentenyl diphosphate + 2 oxidized [2Fe-2S]-[ferredoxin] + H2O = (2E)-4-hydroxy-3-methylbut-2-enyl diphosphate + 2 reduced [2Fe-2S]-[ferredoxin] + 2 H(+). The enzyme catalyses dimethylallyl diphosphate + 2 oxidized [2Fe-2S]-[ferredoxin] + H2O = (2E)-4-hydroxy-3-methylbut-2-enyl diphosphate + 2 reduced [2Fe-2S]-[ferredoxin] + 2 H(+). The protein operates within isoprenoid biosynthesis; dimethylallyl diphosphate biosynthesis; dimethylallyl diphosphate from (2E)-4-hydroxy-3-methylbutenyl diphosphate: step 1/1. It functions in the pathway isoprenoid biosynthesis; isopentenyl diphosphate biosynthesis via DXP pathway; isopentenyl diphosphate from 1-deoxy-D-xylulose 5-phosphate: step 6/6. Its function is as follows. Catalyzes the conversion of 1-hydroxy-2-methyl-2-(E)-butenyl 4-diphosphate (HMBPP) into a mixture of isopentenyl diphosphate (IPP) and dimethylallyl diphosphate (DMAPP). Acts in the terminal step of the DOXP/MEP pathway for isoprenoid precursor biosynthesis. The protein is 4-hydroxy-3-methylbut-2-enyl diphosphate reductase of Paracoccus denitrificans (strain Pd 1222).